We begin with the raw amino-acid sequence, 500 residues long: NAD(P)H-quinone oxidoreductase chain 4, chloroplastic (500 aa).

The next 14 membrane-spanning stretches (helical) occupy residues 4–24, 37–57, 87–107, 113–130, 134–154, 167–187, 211–231, 242–262, 272–292, 313–333, 334–354, 386–406, 417–437, and 462–482; these read FPWL…IFFL, MSIC…HFQL, LGSI…AWPV, LFYF…GLFS, LLLF…LLSM, FILY…GMGL, ILFY…IPLH, HYST…YGLI, AHYL…IYAA, MGFI…GAIL, QILS…TACD, LALP…GLIT, LITF…LSML, and LFLL…PDFV.

Belongs to the complex I subunit 4 family.

It is found in the plastid. It localises to the chloroplast thylakoid membrane. The enzyme catalyses a plastoquinone + NADH + (n+1) H(+)(in) = a plastoquinol + NAD(+) + n H(+)(out). It carries out the reaction a plastoquinone + NADPH + (n+1) H(+)(in) = a plastoquinol + NADP(+) + n H(+)(out). The protein is NAD(P)H-quinone oxidoreductase chain 4, chloroplastic of Oryza nivara (Indian wild rice).